We begin with the raw amino-acid sequence, 208 residues long: Small ribosomal subunit protein uS4 (208 aa).

An S4 RNA-binding domain is found at Arg99–Leu165.

Belongs to the universal ribosomal protein uS4 family. As to quaternary structure, part of the 30S ribosomal subunit. Contacts protein S5. The interaction surface between S4 and S5 is involved in control of translational fidelity.

Functionally, one of the primary rRNA binding proteins, it binds directly to 16S rRNA where it nucleates assembly of the body of the 30S subunit. Its function is as follows. With S5 and S12 plays an important role in translational accuracy. This is Small ribosomal subunit protein uS4 from Desulfitobacterium hafniense (strain DSM 10664 / DCB-2).